The sequence spans 118 residues: Protein BEX4 (118 aa).

The disordered stretch occupies residues 14-50; the sequence is VEKDKKNKKGGKASKQSEEESHHLEEVENKKPGGNVR. Residues 28–44 are compositionally biased toward basic and acidic residues; that stretch reads KQSEEESHHLEEVENKK. An interaction with SIRT2 region spans residues 30–88; the sequence is SEEESHHLEEVENKKPGGNVRRKVRRLVPNFLWAIPNRHVDHSEGGEEVGRFVGQVMEA. The interaction with alpha-tubulin stretch occupies residues 30-118; sequence SEEESHHLEE…DNHYDFCLIP (89 aa). Cys115 contacts Zn(2+).

Belongs to the BEX family. In terms of assembly, interacts with alpha-tubulin. Interacts with SIRT2. Ubiquitinated and degraded by the proteasome.

It localises to the cytoplasm. It is found in the cytoskeleton. The protein localises to the spindle pole. Its subcellular location is the nucleus. In terms of biological role, may play a role in microtubule deacetylation by negatively regulating the SIRT2 deacetylase activity toward alpha-tubulin and thereby participate in the control of cell cycle progression and genomic stability. In absence of reductive stress, acts as a pseudosubstrate for the CRL2(FEM1B) complex: associates with FEM1B via zinc, thereby preventing association between FEM1B and its substrates. The polypeptide is Protein BEX4 (Rattus norvegicus (Rat)).